A 150-amino-acid chain; its full sequence is Small ribosomal subunit protein eS6 (150 aa).

Belongs to the eukaryotic ribosomal protein eS6 family.

The chain is Small ribosomal subunit protein eS6 from Caldivirga maquilingensis (strain ATCC 700844 / DSM 13496 / JCM 10307 / IC-167).